Consider the following 507-residue polypeptide: Subtilisin-like protease 1 (507 aa).

The N-terminal stretch at 1–19 (MGVFRFISISLAAVSAANA) is a signal peptide. Positions 20 to 116 (AQILSMPHAQ…VEPDTIISVN (97 aa)) are excised as a propeptide. Residues 34 to 113 (SYIVMMKDDT…VMFVEPDTII (80 aa)) form the Inhibitor I9 domain. A Peptidase S8 domain is found at 126–400 (SWGLARISNS…NVLISNGGAK (275 aa)). Catalysis depends on charge relay system residues D158 and H190. Residues 175-198 (GSNQVNDGDDRDGSGHGTHTSGTM) form a disordered region. The N-linked (GlcNAc...) asparagine glycan is linked to N251. The segment covering 282–294 (NENQDARSSSPAS) has biased composition (polar residues). The disordered stretch occupies residues 282–312 (NENQDARSSSPASEPSVCTVGSSAEDDSRSS). Catalysis depends on S345, which acts as the Charge relay system. Positions 378 to 394 (SSSITDVGPGTPTNVLI) are enriched in polar residues. Positions 378–486 (SSSITDVGPG…YPGGDNFDFD (109 aa)) are disordered. Composition is skewed to pro residues over residues 405 to 428 (KPAP…PSQP) and 438 to 449 (EPFPGEPFPGEP). The segment covering 450 to 461 (FPGESSPGESAP) has biased composition (low complexity). Residues 462–476 (APAPMPPSPQHPHTP) show a composition bias toward pro residues.

It belongs to the peptidase S8 family.

It localises to the secreted. Functionally, secreted subtilisin-like serine protease with keratinolytic activity that contributes to pathogenicity. This chain is Subtilisin-like protease 1 (SUB1), found in Trichophyton equinum (Horse ringworm fungus).